The following is a 278-amino-acid chain: Putative carbamate hydrolase RutD (278 aa).

Belongs to the AB hydrolase superfamily. Hydrolase RutD family.

It carries out the reaction carbamate + 2 H(+) = NH4(+) + CO2. Involved in pyrimidine catabolism. May facilitate the hydrolysis of carbamate, a reaction that can also occur spontaneously. The polypeptide is Putative carbamate hydrolase RutD (Yersinia enterocolitica serotype O:8 / biotype 1B (strain NCTC 13174 / 8081)).